Consider the following 911-residue polypeptide: Valine--tRNA ligase (911 aa).

Residues 53 to 63 carry the 'HIGH' region motif; sequence PNVTGTLHLGH. The 'KMSKS' region signature appears at 533-537; the sequence is KMSKS. Lys-536 contributes to the ATP binding site. Residues 845-910 are a coiled coil; it reads KEIERLTKEL…NRLAMLRSMQ (66 aa).

This sequence belongs to the class-I aminoacyl-tRNA synthetase family. ValS type 1 subfamily. Monomer.

The protein resides in the cytoplasm. It catalyses the reaction tRNA(Val) + L-valine + ATP = L-valyl-tRNA(Val) + AMP + diphosphate. Catalyzes the attachment of valine to tRNA(Val). As ValRS can inadvertently accommodate and process structurally similar amino acids such as threonine, to avoid such errors, it has a 'posttransfer' editing activity that hydrolyzes mischarged Thr-tRNA(Val) in a tRNA-dependent manner. This chain is Valine--tRNA ligase, found in Symbiobacterium thermophilum (strain DSM 24528 / JCM 14929 / IAM 14863 / T).